The chain runs to 152 residues: Membrane-spanning 4-domains subfamily A member 13 (152 aa).

4 helical membrane-spanning segments follow: residues 1–21 (MIGI…MGQI), 32–52 (TYKT…VFLI), 66–86 (TLII…LTII), and 111–131 (ILLF…IYSC).

The protein belongs to the MS4A family.

The protein localises to the membrane. Its function is as follows. May be involved in signal transduction as a component of a multimeric receptor complex. The sequence is that of Membrane-spanning 4-domains subfamily A member 13 (MS4A13) from Homo sapiens (Human).